The chain runs to 352 residues: MSDWKVDPDTRRRLLQLQKIGANKKCMDCGAPNPQWATPKFGAFICLECAGIHRGLGVHISFVRSITMDQFKPEELLRMEKGGNEPLTEWFKSHNIDLSLPQKVKYDNPVAEDYKEKLTCLCEDRVFEEREHLDFDASKLSATSQTAASATPGVAQSREGTPLENRRSATPANSSNGANFQKEKNEAYFAELGKKNQSRPDHLPPSQGGKYQGFGSTPAKPPQERSAGSSNTLSLENFQADPLGTLSRGWGLFSSAVTKSFEDVNETVIKPHVQQWQSGELSEETKRAAAQFGQKFQETSSYGFQAFSNFTKNFNGNAEDSSTAGNTTHTEYQKIDNNDKKNEQDEDKWDDF.

Positions 11 to 127 (RRRLLQLQKI…LTCLCEDRVF (117 aa)) constitute an Arf-GAP domain. The segment at 26-49 (CMDCGAPNPQWATPKFGAFICLEC) adopts a C4-type zinc-finger fold. The span at 138–151 (SKLSATSQTAASAT) shows a compositional bias: low complexity. Disordered stretches follow at residues 138–181 (SKLS…ANFQ) and 196–231 (NQSR…GSSN). Position 151 is a phosphothreonine (threonine 151). Residue serine 157 is modified to Phosphoserine. Threonine 161 carries the post-translational modification Phosphothreonine. A Phosphoserine modification is found at serine 168. Polar residues predominate over residues 168 to 179 (SATPANSSNGAN). The residue at position 170 (threonine 170) is a Phosphothreonine. Residue serine 260 is modified to Phosphoserine. Residues 315–330 (NGNAEDSSTAGNTTHT) are compositionally biased toward polar residues. The disordered stretch occupies residues 315–352 (NGNAEDSSTAGNTTHTEYQKIDNNDKKNEQDEDKWDDF). A compositionally biased stretch (basic and acidic residues) spans 331 to 343 (EYQKIDNNDKKNE).

It localises to the cytoplasm. Its subcellular location is the mitochondrion. It is found in the perinuclear region. The protein localises to the golgi apparatus. In terms of biological role, GTPase-activating protein (GAP) for ARF1 and ARF2. Involved in intracellular vesicular transport. Required for transport from the trans-Golgi network. Implicated in the regulation of retrograde transport from the Golgi to the ER and in actin cytoskeletal organization. May be involved in the maintenance of mitochondrial morphology, possibly through organizing the actin cytoskeleton in Saccharomyces. This is ADP-ribosylation factor GTPase-activating protein GCS1 (GCS1) from Saccharomyces cerevisiae (strain ATCC 204508 / S288c) (Baker's yeast).